The chain runs to 351 residues: F-box protein At1g47810 (351 aa).

The F-box domain occupies 8–54; sequence LQSLDPIPVDVLFEIFLNLPAKFLARFVCVSKLWAKIIRNQDFIRSF.

The sequence is that of F-box protein At1g47810 from Arabidopsis thaliana (Mouse-ear cress).